Consider the following 162-residue polypeptide: Dihydrofolate reductase type 3 (162 aa).

The DHFR domain maps to 2–160; sequence LISLIAALAH…YACEFVTLSR (159 aa).

It belongs to the dihydrofolate reductase family. Monomer.

The enzyme catalyses (6S)-5,6,7,8-tetrahydrofolate + NADP(+) = 7,8-dihydrofolate + NADPH + H(+). Its pathway is cofactor biosynthesis; tetrahydrofolate biosynthesis; 5,6,7,8-tetrahydrofolate from 7,8-dihydrofolate: step 1/1. Its function is as follows. Key enzyme in folate metabolism. Catalyzes an essential reaction for de novo glycine and purine synthesis, and for DNA precursor synthesis. This Salmonella typhimurium protein is Dihydrofolate reductase type 3 (dhfrIII).